Reading from the N-terminus, the 388-residue chain is Endoglucanase 3 (388 aa).

A signal peptide spans 1–16 (MKHSVLAGLFATGALA). Positions 17–52 (QGGAWQQCGGVGFSGSTSCVSGYTCVYLNDWYSQCQ) constitute a CBM1 domain. 2 cysteine pairs are disulfide-bonded: cysteine 24/cysteine 41 and cysteine 35/cysteine 51. The linker stretch occupies residues 53-91 (PQPTTLRTTTTPGATSTTRSAPAATSTTPAKGKFKWFGI). The tract at residues 56–81 (TTLRTTTTPGATSTTRSAPAATSTTP) is disordered. N-linked (GlcNAc...) asparagine glycans are attached at residues asparagine 92 and asparagine 155. The segment at 92–388 (NQSCAEFGKG…YNSLLKKYVP (297 aa)) is catalytic. The active-site Proton donor is glutamate 215. A glycan (N-linked (GlcNAc...) asparagine) is linked at asparagine 259. Glutamate 322 (nucleophile) is an active-site residue.

The protein belongs to the glycosyl hydrolase 5 (cellulase A) family.

It carries out the reaction Endohydrolysis of (1-&gt;4)-beta-D-glucosidic linkages in cellulose, lichenin and cereal beta-D-glucans.. This chain is Endoglucanase 3 (CMC3), found in Humicola insolens (Soft-rot fungus).